A 696-amino-acid chain; its full sequence is C2 domain-containing protein 2 (696 aa).

The chain crosses the membrane as a helical span at residues 13-33; that stretch reads AQWLALVSLFVAALATVGLYL. The region spanning 51-242 is the SMP-LBD domain; sequence EPGEGPRPGS…PTTVKEAQNL (192 aa). Phosphoserine is present on S60. The region spanning 245-362 is the C2 domain; sequence AASTAQESCP…KKQPSGPQSF (118 aa). S435 and S441 each carry phosphoserine. T445 carries the post-translational modification Phosphothreonine. Residues 539–580 form a disordered region; the sequence is VDSTHQEDAPSHPERAAASAPPEEAESAQASLAPKPQEDELD. The segment covering 542 to 553 has biased composition (basic and acidic residues); that stretch reads THQEDAPSHPER. A compositionally biased stretch (low complexity) spans 554–572; that stretch reads AAASAPPEEAESAQASLAP. S581 carries the post-translational modification Phosphoserine.

The protein resides in the membrane. This Homo sapiens (Human) protein is C2 domain-containing protein 2 (C2CD2).